The primary structure comprises 78 residues: Defensin-like protein 90 (78 aa).

The signal sequence occupies residues 1 to 25 (MTTKMFSYVLLHSLMMFAIILSSMG). Disulfide bonds link Cys33–Cys70, Cys38–Cys59, Cys44–Cys68, and Cys48–Cys69.

The protein belongs to the DEFL family.

Its subcellular location is the secreted. The polypeptide is Defensin-like protein 90 (Arabidopsis thaliana (Mouse-ear cress)).